Reading from the N-terminus, the 150-residue chain is Arginine repressor (150 aa).

It belongs to the ArgR family.

The protein localises to the cytoplasm. The protein operates within amino-acid biosynthesis; L-arginine biosynthesis [regulation]. Its function is as follows. Regulates arginine biosynthesis genes. The sequence is that of Arginine repressor from Clostridium botulinum (strain Alaska E43 / Type E3).